Consider the following 293-residue polypeptide: 4-hydroxy-tetrahydrodipicolinate synthase (293 aa).

Residue threonine 47 participates in pyruvate binding. Tyrosine 136 acts as the Proton donor/acceptor in catalysis. The Schiff-base intermediate with substrate role is filled by lysine 164. Residue isoleucine 206 coordinates pyruvate.

This sequence belongs to the DapA family. Homotetramer; dimer of dimers.

It is found in the cytoplasm. It carries out the reaction L-aspartate 4-semialdehyde + pyruvate = (2S,4S)-4-hydroxy-2,3,4,5-tetrahydrodipicolinate + H2O + H(+). It functions in the pathway amino-acid biosynthesis; L-lysine biosynthesis via DAP pathway; (S)-tetrahydrodipicolinate from L-aspartate: step 3/4. Functionally, catalyzes the condensation of (S)-aspartate-beta-semialdehyde [(S)-ASA] and pyruvate to 4-hydroxy-tetrahydrodipicolinate (HTPA). The chain is 4-hydroxy-tetrahydrodipicolinate synthase from Listeria monocytogenes serovar 1/2a (strain ATCC BAA-679 / EGD-e).